Here is a 56-residue protein sequence, read N- to C-terminus: uncharacterized protein (56 aa).

Belongs to the archaeal ATPase family.

This is an uncharacterized protein from Methanocaldococcus jannaschii (strain ATCC 43067 / DSM 2661 / JAL-1 / JCM 10045 / NBRC 100440) (Methanococcus jannaschii).